We begin with the raw amino-acid sequence, 445 residues long: Coronin-A (445 aa).

WD repeat units lie at residues 77 to 117, 127 to 167, 170 to 209, and 259 to 299; these read GHKS…LTDS, GHKR…NLTT, GHSDMITSCEWNHNGSQIVTTCKDKKARVFDPRTNSIVNE, and DSAS…PYIH. Residues 410–444 adopt a coiled-coil conformation; that stretch reads KNEKELREEYEKLKIRVAYLESEIVKKDAKIKELT.

Belongs to the WD repeat coronin family. Binds to F-actin.

It is found in the cell surface. Functionally, required for normal motility. Participates in cytokinesis. The polypeptide is Coronin-A (corA) (Dictyostelium discoideum (Social amoeba)).